The sequence spans 367 residues: RNA-binding protein 48 (367 aa).

Residues 46–124 form the RRM domain; it reads QYLLIQGVPA…GLLHVCYAPE (79 aa). Positions 217–228 are enriched in basic and acidic residues; sequence PVDRASDSSKDG. Disordered stretches follow at residues 217–243, 277–303, and 339–367; these read PVDRASDSSKDGRNHHKTMGHYNHNGS, RTTQLQERKRRREDDRKLGTFLQTNPS, and EVISSVPKPPEDKPEDVNTSHPLKQRRRI. The span at 347 to 356 shows a compositional bias: basic and acidic residues; it reads PPEDKPEDVN.

It belongs to the RBM48 family. As to quaternary structure, component of the minor spliceosome. Within this complex, interacts with ARMC7 and PRPF8/PRP8.

Its function is as follows. As a component of the minor spliceosome, involved in the splicing of U12-type introns in pre-mRNAs. The protein is RNA-binding protein 48 (RBM48) of Pongo abelii (Sumatran orangutan).